Reading from the N-terminus, the 425-residue chain is MFIDKAKIYVKSGDGGNGSVSFRREKYVPLGGPDGGDGGKGGDIVLVSDPDMTTLLDFSYKRKYKADAGEGGSRSRSYGKDAEDLYIKVPMGTVVKEASTGKIMADLSHENDKVVVVKGGRGGRGNARFATATRQAPNFAEPGMPGEEREIILELKLLADVGLVGFPNVGKSTILSTVSNAKPKIANYHFTTLKPNLGVASIKGLEPFVIADIPGIIEGASEGVGLGLDFLRHIERTRVLIHVIDISGIEGRDPYEDFLKINEELKNYSVKLWDRPQIVAANKSDLVAEDKRFEEFKEKIQKLGDYKIFKISAATGEGIKELMAEVSKTLATIPVTQVEIKREDLFIPEEKRFTYEILREDDGTFVVEGSFVDRLLGSVNVNEPDGLRYFYVVLKNKGVIDDLIKKGIKDGDMVRLNDFEFEFVI.

The 158-residue stretch at 1–158 (MFIDKAKIYV…REIILELKLL (158 aa)) folds into the Obg domain. The region spanning 159 to 331 (ADVGLVGFPN…LMAEVSKTLA (173 aa)) is the OBG-type G domain. Residues 165-172 (GFPNVGKS), 190-194 (FTTLK), 212-215 (DIPG), 282-285 (NKSD), and 312-314 (SAA) contribute to the GTP site. Mg(2+) contacts are provided by serine 172 and threonine 192. Positions 345-425 (LFIPEEKRFT…LNDFEFEFVI (81 aa)) constitute an OCT domain.

This sequence belongs to the TRAFAC class OBG-HflX-like GTPase superfamily. OBG GTPase family. Monomer. Mg(2+) is required as a cofactor.

The protein localises to the cytoplasm. Its function is as follows. An essential GTPase which binds GTP, GDP and possibly (p)ppGpp with moderate affinity, with high nucleotide exchange rates and a fairly low GTP hydrolysis rate. Plays a role in control of the cell cycle, stress response, ribosome biogenesis and in those bacteria that undergo differentiation, in morphogenesis control. The sequence is that of GTPase Obg from Clostridium tetani (strain Massachusetts / E88).